The following is a 505-amino-acid chain: Calcium/calmodulin-dependent protein kinase kinase 1 (505 aa).

A disordered region spans residues 28–66 (LEEADEGPEPARNGVDPPPRARAASVIPGSASRPTPVRP). Phosphoserine occurs at positions 67 and 74. The residue at position 78 (Arg78) is an Asymmetric dimethylarginine. The disordered stretch occupies residues 84–105 (LGAQVGPYSTGPASHISPRSWR). A Phosphoserine modification is found at Ser100. Thr108 is modified (phosphothreonine). The Protein kinase domain maps to 128 to 409 (YKLQSEIGKG…VSDIKLHPWV (282 aa)). ATP-binding positions include 134–142 (IGKGAYGVV) and Lys157. An RP domain region spans residues 167-189 (QYGFPRRPPPRGSQATQGGPAKQ). The active-site Proton acceptor is Asp275. The segment at 435–440 (KNSVRL) is autoinhibitory domain. The interval 438 to 463 (VRLIPSWTTVILVKSMLRKRSFGNPF) is calmodulin-binding. Residues Ser458, Ser475, and Ser492 each carry the phosphoserine modification. Residues 460 to 505 (GNPFEPQARREERSMSAPGSLLMKEGCGEGCKSPELPGVQEDEAAS) are disordered.

Belongs to the protein kinase superfamily. Ser/Thr protein kinase family. Interacts with CAMK4 and calmodulin. In terms of processing, appears to be autophosphorylated in a Ca(2+)/calmodulin-dependent manner. Phosphorylated at multiple sites by PRCAKA/PKA. Phosphorylation of Ser-458 is blocked upon binding to Ca(2+)/calmodulin. In vitro, phosphorylated by CAMK1 and CAMK4. In terms of tissue distribution, widely expressed. Differentially expressed in various brain regions.

It localises to the cytoplasm. The protein resides in the nucleus. The enzyme catalyses L-seryl-[protein] + ATP = O-phospho-L-seryl-[protein] + ADP + H(+). The catalysed reaction is L-threonyl-[protein] + ATP = O-phospho-L-threonyl-[protein] + ADP + H(+). With respect to regulation, activated by Ca(2+)/calmodulin. Binding of calmodulin may relieve intrasteric autoinhibition. Partially inhibited upon phosphorylation by PRCAKA/PKA. May be regulated through phosphorylation by CAMK1 and CAMK4. Functionally, calcium/calmodulin-dependent protein kinase that belongs to a proposed calcium-triggered signaling cascade involved in a number of cellular processes. Phosphorylates CAMK1, CAMK1D, CAMK1G and CAMK4. Involved in regulating cell apoptosis. Promotes cell survival by phosphorylating AKT1/PKB that inhibits pro-apoptotic BAD/Bcl2-antagonist of cell death. The sequence is that of Calcium/calmodulin-dependent protein kinase kinase 1 (Camkk1) from Mus musculus (Mouse).